A 293-amino-acid chain; its full sequence is Ribosomal protein L11 methyltransferase (293 aa).

S-adenosyl-L-methionine-binding residues include Thr-145, Gly-166, Asp-188, and Asn-230.

It belongs to the methyltransferase superfamily. PrmA family.

The protein resides in the cytoplasm. The enzyme catalyses L-lysyl-[protein] + 3 S-adenosyl-L-methionine = N(6),N(6),N(6)-trimethyl-L-lysyl-[protein] + 3 S-adenosyl-L-homocysteine + 3 H(+). In terms of biological role, methylates ribosomal protein L11. The polypeptide is Ribosomal protein L11 methyltransferase (Klebsiella pneumoniae (strain 342)).